The sequence spans 217 residues: Monomethylamine corrinoid protein 2 (217 aa).

Residues M1 to D91 form the B12-binding N-terminal domain. The B12-binding domain occupies A93–K217. A methylcob(III)alamin-binding site is contributed by H106.

The protein belongs to the methylamine corrinoid protein family. As to quaternary structure, can form a complex with MtmB.

Its pathway is one-carbon metabolism; methanogenesis from methylamine. Acts as a methyl group carrier between MtmB and MtbA. The chain is Monomethylamine corrinoid protein 2 (mtmC2) from Methanosarcina barkeri.